The following is a 53-amino-acid chain: ATP synthase protein 8 (53 aa).

Residues 4-24 traverse the membrane as a helical segment; it reads MAPISWLLLFIIFSITFILFC.

It belongs to the ATPase protein 8 family. F-type ATPases have 2 components, CF(1) - the catalytic core - and CF(0) - the membrane proton channel.

Its subcellular location is the mitochondrion membrane. Its function is as follows. Mitochondrial membrane ATP synthase (F(1)F(0) ATP synthase or Complex V) produces ATP from ADP in the presence of a proton gradient across the membrane which is generated by electron transport complexes of the respiratory chain. F-type ATPases consist of two structural domains, F(1) - containing the extramembraneous catalytic core and F(0) - containing the membrane proton channel, linked together by a central stalk and a peripheral stalk. During catalysis, ATP synthesis in the catalytic domain of F(1) is coupled via a rotary mechanism of the central stalk subunits to proton translocation. Part of the complex F(0) domain. Minor subunit located with subunit a in the membrane. The polypeptide is ATP synthase protein 8 (mt:ATPase8) (Drosophila sechellia (Fruit fly)).